A 683-amino-acid chain; its full sequence is Cytoskeleton-associated protein 2 (683 aa).

Disordered regions lie at residues 1-28 (MSTP…QRRQ) and 153-175 (NSKK…KKPV). Phosphoserine is present on residues Ser178 and Ser190. Disordered stretches follow at residues 214–236 (KATK…SSNM) and 336–403 (EKSE…EKPV). Positions 219-236 (QPVNTSSVTVKSNRSSNM) are enriched in polar residues. Basic and acidic residues-rich tracts occupy residues 336–345 (EKSEPVDQRR) and 362–376 (ETSE…EWKA). A Phosphoserine modification is found at Ser534. 2 positions are modified to phosphothreonine: Thr579 and Thr582. Position 595 is a phosphoserine (Ser595). Phosphothreonine occurs at positions 596 and 597. Tyr599 carries the post-translational modification Phosphotyrosine. Phosphoserine is present on Ser602.

Belongs to the CKAP2 family. Associates with alpha- and beta-tubulins. Abundant in testis, thymus, and in tumor derived cell lines, while barely detectable in liver, prostate, and kidney.

It is found in the cytoplasm. It localises to the cytoskeleton. Its subcellular location is the spindle. The protein resides in the spindle pole. Functionally, possesses microtubule stabilizing properties. Involved in regulating aneuploidy, cell cycling, and cell death in a p53/TP53-dependent manner. The sequence is that of Cytoskeleton-associated protein 2 from Homo sapiens (Human).